Reading from the N-terminus, the 609-residue chain is Copper resistance protein A (609 aa).

Residues 1–32 constitute a signal peptide (tat-type signal); it reads MESRTSRRTFVKGLAAAGVLGGLGLWRSPSWA. Cu cation is bound by residues histidine 100, histidine 102, histidine 142, and histidine 144. 5 consecutive repeat copies span residues 367–374, 375–382, 408–415, 419–426, and 427–434. The tract at residues 367-434 is 5 X 8 AA tandem repeats of D-H-X-X-M-X-G-M; that stretch reads DDMGMGGMDH…GMDHGAMGGM (68 aa). Cu cation-binding residues include histidine 542, histidine 545, histidine 547, histidine 590, cysteine 591, histidine 592, histidine 596, and methionine 601.

Belongs to the multicopper oxidase family. CopA subfamily. In terms of processing, predicted to be exported by the Tat system. The position of the signal peptide cleavage has been experimentally proven.

The protein localises to the periplasm. In terms of biological role, mediates copper resistance by sequestration of copper in the periplasm along with the copper-binding protein CopC. May have oxidase activity. The sequence is that of Copper resistance protein A (copA) from Pseudomonas syringae pv. tomato.